A 318-amino-acid polypeptide reads, in one-letter code: Esterase FVEG_12639 (318 aa).

Active-site residues include S156, D255, and H285.

Belongs to the AB hydrolase 3 family.

Its function is as follows. Esterase; part of the Fusarium detoxification of benzoxazolinone cluster 2 (FDB2) involved in the degradation of benzoxazolinones produced by the host plant. Maize, wheat, and rye produce the 2 benzoxazinone phytoanticipins 2,4-dihy-droxy-7-methoxy-1,4-benzoxazin-3-one (DIMBOA) and 2,4-dihydroxy-1,4-benzoxazin-3-one (DIBOA) that, due to their inherent instability once released, spontaneously degrade to the more stable corresponding benzoxazolinones, 6-methoxy-2-benzoxazolinone (MBOA) and 2-benzoxazolinone (BOA), respectively. The first step in the detoxification of benzoxazolinones involves the hydrolysis of the cyclic ester bond of benzoxazolinones by the FDB1 cluster gamma-lactamase MBL1 to aminophenols. MBL1 is able to convert BOA into 2-aminophenol (2-AP), as well as MBOA into 5-methoxy-2-aminophenol (2-AMP). The FDB2 cluster N-malonyltransferase FDB2/NAT1 then metabolizes aminophenols via N-malonylation to non-toxic malonamic acids. FDB2/NAT1 converts 2-AP into N-(2-hydroxyphenyl) malonamic acid (HPMA) and 2-AMP into N-(2-hydroxy-4-methoxyphenyl) malonamic acid (HMPMA). The duplicated dienlactone hydrolases DLH1 and DLH2 may provide redundant function for hydrolyzing the lactone moiety in the BOA molecule. The roles of the amidases an other enzymes encoded by the 2 FDB clusters have not been identified so far. This chain is Esterase FVEG_12639, found in Gibberella moniliformis (strain M3125 / FGSC 7600) (Maize ear and stalk rot fungus).